A 284-amino-acid chain; its full sequence is 2-dehydro-3-deoxyphosphooctonate aldolase (284 aa).

It belongs to the KdsA family.

Its subcellular location is the cytoplasm. The catalysed reaction is D-arabinose 5-phosphate + phosphoenolpyruvate + H2O = 3-deoxy-alpha-D-manno-2-octulosonate-8-phosphate + phosphate. The protein operates within carbohydrate biosynthesis; 3-deoxy-D-manno-octulosonate biosynthesis; 3-deoxy-D-manno-octulosonate from D-ribulose 5-phosphate: step 2/3. It functions in the pathway bacterial outer membrane biogenesis; lipopolysaccharide biosynthesis. The sequence is that of 2-dehydro-3-deoxyphosphooctonate aldolase from Paraburkholderia xenovorans (strain LB400).